The sequence spans 155 residues: Small ribosomal subunit protein uS7 (155 aa).

Belongs to the universal ribosomal protein uS7 family. As to quaternary structure, part of the 30S ribosomal subunit. Contacts proteins S9 and S11.

In terms of biological role, one of the primary rRNA binding proteins, it binds directly to 16S rRNA where it nucleates assembly of the head domain of the 30S subunit. Is located at the subunit interface close to the decoding center, probably blocks exit of the E-site tRNA. The chain is Small ribosomal subunit protein uS7 from Mycoplasma mycoides subsp. mycoides SC (strain CCUG 32753 / NCTC 10114 / PG1).